Reading from the N-terminus, the 399-residue chain is MALKLVYGVFTLALLGISSVNADCSLKIPESVENEKTPVIMVRKSLKTFEYDLFQPTGEVTNFPERTELLLACTGAQNYFKNGEESVTLMCHNNEFDDGQGNGLDLFTCVKTPTAELRKTKERCSLGDLYVYDVVFRISEEELVGPVYDICYNEYSQKPAYSRNIINGAAVNYRVPESETDLTVSLAKDFTTRDVNNYFKLENQKQRFQGYTIDGKPLVDDKNFFAPGQLAPDTSMITPADKLSTYDYANIVPQYKTVYDGNVWRVENITRDLAVNRQAKFEVYTGGYERLTALHNGKEEEIFLSAKKYVHEIPKYIYKFVVDKENDAGIVFFTLNNPHVKNVKGTEFCKNQCEEANVLDSNFKDWTQGYTFCCTWNNVKDYVRALPQDIEINNLLKFN.

Positions 1-22 (MALKLVYGVFTLALLGISSVNA) are cleaved as a signal peptide. Asn-268 carries an N-linked (GlcNAc...) asparagine glycan.

The protein belongs to the DNA/RNA non-specific endonuclease family. Requires a divalent metal cation as cofactor. Saliva (at protein level).

It is found in the secreted. Binds double-stranded DNA (dsDNA) with high affinity. Binds double-stranded RNA. Binds single-stranded DNA with lower affinity and with a preference for purine-rich sequences. Shows residual nuclease activity for dsDNA. May facilitate blood meal intake by lowering the local viscosity created by the release of host DNA. The protein is Salivary protein Tsal1 of Glossina morsitans morsitans (Savannah tsetse fly).